The sequence spans 356 residues: 1-deoxy-D-xylulose 5-phosphate reductoisomerase (356 aa).

NADPH contacts are provided by Thr-7, Gly-8, Ser-9, Ile-10, Gly-31, Asn-33, and Asn-111. Lys-112 contributes to the 1-deoxy-D-xylulose 5-phosphate binding site. Glu-113 serves as a coordination point for NADPH. A Mn(2+)-binding site is contributed by Asp-131. 1-deoxy-D-xylulose 5-phosphate is bound by residues Ser-132, Glu-133, Ser-155, and His-178. Glu-133 serves as a coordination point for Mn(2+). Gly-184 serves as a coordination point for NADPH. 1-deoxy-D-xylulose 5-phosphate-binding residues include Ser-191, Asn-196, Lys-197, and Glu-200. Glu-200 is a binding site for Mn(2+).

This sequence belongs to the DXR family. The cofactor is Mg(2+). It depends on Mn(2+) as a cofactor.

The catalysed reaction is 2-C-methyl-D-erythritol 4-phosphate + NADP(+) = 1-deoxy-D-xylulose 5-phosphate + NADPH + H(+). The protein operates within isoprenoid biosynthesis; isopentenyl diphosphate biosynthesis via DXP pathway; isopentenyl diphosphate from 1-deoxy-D-xylulose 5-phosphate: step 1/6. Catalyzes the NADPH-dependent rearrangement and reduction of 1-deoxy-D-xylulose-5-phosphate (DXP) to 2-C-methyl-D-erythritol 4-phosphate (MEP). This Campylobacter jejuni subsp. jejuni serotype O:23/36 (strain 81-176) protein is 1-deoxy-D-xylulose 5-phosphate reductoisomerase.